Here is a 532-residue protein sequence, read N- to C-terminus: Eukaryotic translation initiation factor 3 subunit D (532 aa).

The segment at 108-161 is disordered; it reads ATVLKTRGGAPRGGSFAGRGGSQRGGRFQNQPGRGPVGGQRGPNPRFGKSKFGW. Gly residues predominate over residues 117–131; that stretch reads APRGGSFAGRGGSQR. Positions 132 to 141 are enriched in low complexity; that stretch reads GGRFQNQPGR. Residues 296-310 are RNA gate; the sequence is PLDFITVDENAADPP.

It belongs to the eIF-3 subunit D family. As to quaternary structure, component of the eukaryotic translation initiation factor 3 (eIF-3) complex.

The protein localises to the cytoplasm. In terms of biological role, mRNA cap-binding component of the eukaryotic translation initiation factor 3 (eIF-3) complex, which is involved in protein synthesis of a specialized repertoire of mRNAs and, together with other initiation factors, stimulates binding of mRNA and methionyl-tRNAi to the 40S ribosome. The eIF-3 complex specifically targets and initiates translation of a subset of mRNAs involved in cell proliferation. In the eIF-3 complex, eif3d specifically recognizes and binds the 7-methylguanosine cap of a subset of mRNAs. This chain is Eukaryotic translation initiation factor 3 subunit D, found in Yarrowia lipolytica (strain CLIB 122 / E 150) (Yeast).